The following is a 381-amino-acid chain: Probable peptidoglycan glycosyltransferase FtsW (381 aa).

9 helical membrane-spanning segments follow: residues 16–36 (LVLL…VYSA), 56–76 (LIFA…DYQL), 80–100 (WAVP…IPGI), 145–165 (LLSA…GLLL), 168–188 (PDMG…FAAG), 191–211 (LIFI…LVVH), 274–294 (VIGE…FFIL), 312–332 (FLAL…MAVV), and 343–363 (LPFL…VGIL).

The protein belongs to the SEDS family. FtsW subfamily.

Its subcellular location is the cell inner membrane. The catalysed reaction is [GlcNAc-(1-&gt;4)-Mur2Ac(oyl-L-Ala-gamma-D-Glu-L-Lys-D-Ala-D-Ala)](n)-di-trans,octa-cis-undecaprenyl diphosphate + beta-D-GlcNAc-(1-&gt;4)-Mur2Ac(oyl-L-Ala-gamma-D-Glu-L-Lys-D-Ala-D-Ala)-di-trans,octa-cis-undecaprenyl diphosphate = [GlcNAc-(1-&gt;4)-Mur2Ac(oyl-L-Ala-gamma-D-Glu-L-Lys-D-Ala-D-Ala)](n+1)-di-trans,octa-cis-undecaprenyl diphosphate + di-trans,octa-cis-undecaprenyl diphosphate + H(+). It participates in cell wall biogenesis; peptidoglycan biosynthesis. Its function is as follows. Peptidoglycan polymerase that is essential for cell division. This chain is Probable peptidoglycan glycosyltransferase FtsW, found in Trichlorobacter lovleyi (strain ATCC BAA-1151 / DSM 17278 / SZ) (Geobacter lovleyi).